We begin with the raw amino-acid sequence, 444 residues long: MSTDKTQVKLRFFTREEDETLHVNDAPIYAPVSLKRYGLSEIVNHLLELPKSMPFDFLIDGELLRTSLQDYLIKKGLSSETFLNVEYTRAVLPPSYLSSFDNEDWVSSLDVGSNYIYSGSYDGIVRTYNLSGKVEKQYSGHSGPIRAVHYISSTRLVSAGNDRTLRLWKTKNDDLKSIDEEEIEDGKTLAILEGHKAPVVSIDVSKDRILSASCDNTVSLWSTNYKEMTVIDPMEDLGGNVSTAAKKRRKLTLKDGSIRRRAPLALFESHSAPVEAVIFDKSDDTVGYSVSQDHTIKTWDLITAKCVDTKTTSYSLLSVAQLPKLNLLACGSSARHITLHDPRVNSSSKITQQQLVGHKNFVVALDTCPENEYMICSASHDGTVKVWDVRSNTAMYTITREDKNVVKGVNDKVFAVKWAKGVGIISGGQDKKIQINKGDNIFSN.

The segment at 8-89 is ubiquitin-like (UBL) domain; sequence VKLRFFTREE…ETFLNVEYTR (82 aa). WD repeat units follow at residues 99-138, 140-178, 194-231, 269-309, 311-350, 357-397, and 408-444; these read SFDN…EKQY, GHSG…LKSI, GHKA…MTVI, SHSA…CVDT, TTSY…SSKI, GHKN…AMYT, and GVND…IFSN. The sufficient for interaction with ERB1 and association with 66S pre-ribosomes stretch occupies residues 99-444; the sequence is SFDNEDWVSS…INKGDNIFSN (346 aa).

This sequence belongs to the WD repeat WDR12/YTM1 family. In terms of assembly, component of the NOP7 complex, composed of ERB1, NOP7 and YTM1. The complex is held together by ERB1, which interacts with NOP7 via its N-terminal domain and with YTM1 via a high-affinity interaction between the seven-bladed beta-propeller domains of the 2 proteins. The NOP7 complex associates with the 66S pre-ribosome. Interacts (via UBL domain) with MDN1 (via VWFA/MIDAS domain).

It is found in the nucleus. The protein localises to the nucleolus. Its subcellular location is the nucleoplasm. In terms of biological role, component of the NOP7 complex, which is required for maturation of the 25S and 5.8S ribosomal RNAs and formation of the 60S ribosome. The sequence is that of Ribosome biogenesis protein YTM1 from Kluyveromyces lactis (strain ATCC 8585 / CBS 2359 / DSM 70799 / NBRC 1267 / NRRL Y-1140 / WM37) (Yeast).